Here is a 59-residue protein sequence, read N- to C-terminus: Venom protein 37.1 (59 aa).

The N-terminal stretch at 1-18 (MVSTLMIASVKLRLYCTA) is a signal peptide.

This sequence belongs to the non-disulfide-bridged peptide (NDBP) superfamily. Long chain multifunctional peptide (group 2) family. In terms of tissue distribution, expressed by the venom gland.

Its subcellular location is the secreted. The sequence is that of Venom protein 37.1 from Lychas mucronatus (Chinese swimming scorpion).